Consider the following 714-residue polypeptide: Structure-specific endonuclease subunit SLX4 1 (714 aa).

Basic and acidic residues-rich tracts occupy residues 1-14 and 24-34; these read MSPE…EDNL and IHEETLAEESH. Disordered stretches follow at residues 1–116 and 337–369; these read MSPE…QGSI and DSSG…KTPQ. The segment covering 36 to 46 has biased composition (low complexity); the sequence is QSIQRSISRLS. Basic residues predominate over residues 79–92; that stretch reads KTKKRKLKVSKPRK.

The protein belongs to the SLX4 family. As to quaternary structure, forms a heterodimer with SLX1. In terms of processing, phosphorylated in response to DNA damage.

The protein localises to the nucleus. In terms of biological role, regulatory subunit of the SLX1-SLX4 structure-specific endonuclease that resolves DNA secondary structures generated during DNA repair and recombination. Has endonuclease activity towards branched DNA substrates, introducing single-strand cuts in duplex DNA close to junctions with ss-DNA. The sequence is that of Structure-specific endonuclease subunit SLX4 1 from Candida tropicalis (strain ATCC MYA-3404 / T1) (Yeast).